Consider the following 701-residue polypeptide: Elongation factor G (701 aa).

Residues 8-290 enclose the tr-type G domain; sequence ERYRNIGISA…AVVDYLPAPT (283 aa). GTP-binding positions include 17 to 24, 88 to 92, and 142 to 145; these read AHIDAGKT, DTPGH, and NKMD.

Belongs to the TRAFAC class translation factor GTPase superfamily. Classic translation factor GTPase family. EF-G/EF-2 subfamily.

It is found in the cytoplasm. Its function is as follows. Catalyzes the GTP-dependent ribosomal translocation step during translation elongation. During this step, the ribosome changes from the pre-translocational (PRE) to the post-translocational (POST) state as the newly formed A-site-bound peptidyl-tRNA and P-site-bound deacylated tRNA move to the P and E sites, respectively. Catalyzes the coordinated movement of the two tRNA molecules, the mRNA and conformational changes in the ribosome. The sequence is that of Elongation factor G from Aeromonas salmonicida (strain A449).